We begin with the raw amino-acid sequence, 494 residues long: MSGRSYQVRTFGCQMNVHDSERLAGLLESAGYVPAPEGSDADVVVFNTCAVRENADNRLYGNLGHLYPAKKSNPAMQIAVGGCLAQKDRSVILDRAPWVDVVFGTHNIHRLPVLLERARHNSAAQVEIAEALEVFPSSLPARRASHHSAWVSISVGCDNTCTFCIVPSLRGGERDRRPGDVLAEVEALVAEGALEITLLGQNVNSYGRSLGDPGAFAKLLRACGRVEGLERVRFTSPHPRDFTDDVIEAMAQTPNVCPQLHMPLQSGSDVVLRRMRRSYRRERFLGIVERVRAAMPDAAITTDIIVGFPGETEADFADTLDVVRTARFAGAFTFKYSPRPGTPAAEMDGAVDPAVVSERYGRLASLQDEMSWAENRAQVGRRVEIVVAEGEGRKDSATGRLSGRARDGRLVHLLVTGPHAQEGLVRPGDVVETVVTRGAPHHLTADGPLLTHRRTRAGDAWAAGRAIAGDTPRPDRPAVSLGMPQLRPSAPAAR.

Residues 4–120 form the MTTase N-terminal domain; it reads RSYQVRTFGC…LPVLLERARH (117 aa). Residues Cys-13, Cys-49, Cys-83, Cys-157, Cys-161, and Cys-164 each coordinate [4Fe-4S] cluster. The Radical SAM core domain maps to 143 to 374; it reads RASHHSAWVS…SLQDEMSWAE (232 aa). The TRAM domain occupies 376–449; sequence RAQVGRRVEI…PHHLTADGPL (74 aa). Residues 465 to 494 form a disordered region; that stretch reads RAIAGDTPRPDRPAVSLGMPQLRPSAPAAR.

The protein belongs to the methylthiotransferase family. MiaB subfamily. Monomer. It depends on [4Fe-4S] cluster as a cofactor.

Its subcellular location is the cytoplasm. The enzyme catalyses N(6)-dimethylallyladenosine(37) in tRNA + (sulfur carrier)-SH + AH2 + 2 S-adenosyl-L-methionine = 2-methylsulfanyl-N(6)-dimethylallyladenosine(37) in tRNA + (sulfur carrier)-H + 5'-deoxyadenosine + L-methionine + A + S-adenosyl-L-homocysteine + 2 H(+). Its function is as follows. Catalyzes the methylthiolation of N6-(dimethylallyl)adenosine (i(6)A), leading to the formation of 2-methylthio-N6-(dimethylallyl)adenosine (ms(2)i(6)A) at position 37 in tRNAs that read codons beginning with uridine. This is tRNA-2-methylthio-N(6)-dimethylallyladenosine synthase from Parafrankia sp. (strain EAN1pec).